A 100-amino-acid chain; its full sequence is NADH-quinone oxidoreductase subunit K (100 aa).

3 helical membrane-spanning segments follow: residues 4-24, 28-48, and 60-80; these read LQHG…GLVI, LLFM…AFVV, and VMYI…LALL.

The protein belongs to the complex I subunit 4L family. NDH-1 is composed of 13 different subunits. Subunits NuoA, H, J, K, L, M, N constitute the membrane sector of the complex.

Its subcellular location is the cell inner membrane. It carries out the reaction a quinone + NADH + 5 H(+)(in) = a quinol + NAD(+) + 4 H(+)(out). Functionally, NDH-1 shuttles electrons from NADH, via FMN and iron-sulfur (Fe-S) centers, to quinones in the respiratory chain. The immediate electron acceptor for the enzyme in this species is believed to be ubiquinone. Couples the redox reaction to proton translocation (for every two electrons transferred, four hydrogen ions are translocated across the cytoplasmic membrane), and thus conserves the redox energy in a proton gradient. This is NADH-quinone oxidoreductase subunit K from Shigella sonnei (strain Ss046).